We begin with the raw amino-acid sequence, 529 residues long: Glutamyl-tRNA(Gln) amidotransferase subunit B-2, chloroplastic/mitochondrial (529 aa).

The segment at 17 to 61 (STRVSLPRGSIPPPPTSSSSSSSSSREGRRPRFFSTTTTSAERPV) is disordered.

This sequence belongs to the GatB/GatE family. GatB subfamily. As to quaternary structure, subunit of the heterotrimeric GatCAB amidotransferase (AdT) complex, composed of A, B and C subunits.

The protein resides in the mitochondrion. It localises to the plastid. It is found in the chloroplast. It carries out the reaction L-glutamyl-tRNA(Gln) + L-glutamine + ATP + H2O = L-glutaminyl-tRNA(Gln) + L-glutamate + ADP + phosphate + H(+). Allows the formation of correctly charged Gln-tRNA(Gln) through the transamidation of misacylated Glu-tRNA(Gln) in chloroplasts and mitochondria. The reaction takes place in the presence of glutamine and ATP through an activated gamma-phospho-Glu-tRNA(Gln). This chain is Glutamyl-tRNA(Gln) amidotransferase subunit B-2, chloroplastic/mitochondrial, found in Micromonas commoda (strain RCC299 / NOUM17 / CCMP2709) (Picoplanktonic green alga).